Consider the following 197-residue polypeptide: Beta-crystallin A2 (197 aa).

An N-terminal arm region spans residues 1–11; that stretch reads MSSAPAPGPAP. 2 consecutive Beta/gamma crystallin 'Greek key' domains span residues 12–52 and 53–99; these read ASLT…KVEN and GVWV…RPVL. A connecting peptide region spans residues 100 to 105; sequence CANHND. 2 consecutive Beta/gamma crystallin 'Greek key' domains span residues 106–147 and 148–196; these read SRVT…KVSS and GAWV…RRVQ.

It belongs to the beta/gamma-crystallin family. Homo/heterodimer, or complexes of higher-order. The structure of beta-crystallin oligomers seems to be stabilized through interactions between the N-terminal arms.

Crystallins are the dominant structural components of the vertebrate eye lens. The protein is Beta-crystallin A2 (CRYBA2) of Homo sapiens (Human).